A 264-amino-acid chain; its full sequence is Thymidylate synthase (264 aa).

Arg21 provides a ligand contact to dUMP. His51 lines the (6R)-5,10-methylene-5,6,7,8-tetrahydrofolate pocket. 126-127 (RR) provides a ligand contact to dUMP. Cys146 functions as the Nucleophile in the catalytic mechanism. DUMP is bound by residues 166-169 (RSAD), Asn177, and 207-209 (HLY). Residue Asp169 participates in (6R)-5,10-methylene-5,6,7,8-tetrahydrofolate binding. (6R)-5,10-methylene-5,6,7,8-tetrahydrofolate is bound at residue Ala263.

This sequence belongs to the thymidylate synthase family. Bacterial-type ThyA subfamily. Homodimer.

The protein localises to the cytoplasm. The enzyme catalyses dUMP + (6R)-5,10-methylene-5,6,7,8-tetrahydrofolate = 7,8-dihydrofolate + dTMP. Its pathway is pyrimidine metabolism; dTTP biosynthesis. In terms of biological role, catalyzes the reductive methylation of 2'-deoxyuridine-5'-monophosphate (dUMP) to 2'-deoxythymidine-5'-monophosphate (dTMP) while utilizing 5,10-methylenetetrahydrofolate (mTHF) as the methyl donor and reductant in the reaction, yielding dihydrofolate (DHF) as a by-product. This enzymatic reaction provides an intracellular de novo source of dTMP, an essential precursor for DNA biosynthesis. The polypeptide is Thymidylate synthase (Methylobacterium nodulans (strain LMG 21967 / CNCM I-2342 / ORS 2060)).